A 265-amino-acid chain; its full sequence is Putative hydro-lyase PST_2764 (265 aa).

This sequence belongs to the D-glutamate cyclase family.

This chain is Putative hydro-lyase PST_2764, found in Stutzerimonas stutzeri (strain A1501) (Pseudomonas stutzeri).